A 134-amino-acid chain; its full sequence is MAKSTSSAPSQRMLRVGEQVRAAITQVLQRGDVRDPLIESTVISISEVRMSPDLKLATAYVTPLGVADHAAVIEALNKHAKFIRGRLGPHLRQMKYMPDVRFRDDTSFENYQKIDSLLRSPEVSRDLDRDSDEE.

Belongs to the RbfA family. As to quaternary structure, monomer. Binds 30S ribosomal subunits, but not 50S ribosomal subunits or 70S ribosomes.

The protein resides in the cytoplasm. Functionally, one of several proteins that assist in the late maturation steps of the functional core of the 30S ribosomal subunit. Associates with free 30S ribosomal subunits (but not with 30S subunits that are part of 70S ribosomes or polysomes). Required for efficient processing of 16S rRNA. May interact with the 5'-terminal helix region of 16S rRNA. In Sinorhizobium medicae (strain WSM419) (Ensifer medicae), this protein is Ribosome-binding factor A.